Consider the following 1363-residue polypeptide: DNA-directed RNA polymerase subunit beta (1363 aa).

This sequence belongs to the RNA polymerase beta chain family. In terms of assembly, the RNAP catalytic core consists of 2 alpha, 1 beta, 1 beta' and 1 omega subunit. When a sigma factor is associated with the core the holoenzyme is formed, which can initiate transcription.

The enzyme catalyses RNA(n) + a ribonucleoside 5'-triphosphate = RNA(n+1) + diphosphate. Functionally, DNA-dependent RNA polymerase catalyzes the transcription of DNA into RNA using the four ribonucleoside triphosphates as substrates. This chain is DNA-directed RNA polymerase subunit beta, found in Pelagibacter ubique (strain HTCC1062).